The following is a 1221-amino-acid chain: DNA topoisomerase 2 (1221 aa).

ATP contacts are provided by residues N65, N94, 122 to 124 (SSN), 135 to 142 (GRHGYGAK), and 352 to 354 (QNK). Positions 432–546 (RTLIVTEGDS…SLLVRNPGFI (115 aa)) constitute a Toprim domain. Mg(2+) contacts are provided by E438, D515, and D517. The Topo IIA-type catalytic domain occupies 681–1097 (LAHSVDGLKP…TPVQLWLGEL (417 aa)). The O-(5'-phospho-DNA)-tyrosine intermediate role is filled by Y771. The tract at residues 952–961 (GLTQRIHING) is interaction with DNA. The disordered stretch occupies residues 1158–1198 (VPPPTKRGAGGRSDGDGGATAAGAAAAVGGRGEKKGPGRAG). Residues 1165–1177 (GAGGRSDGDGGAT) show a composition bias toward gly residues.

It belongs to the type II topoisomerase family. Homodimer. Mg(2+) serves as cofactor. The cofactor is Mn(2+). Ca(2+) is required as a cofactor.

Its subcellular location is the nucleus. The enzyme catalyses ATP-dependent breakage, passage and rejoining of double-stranded DNA.. Its function is as follows. Control of topological states of DNA by transient breakage and subsequent rejoining of DNA strands. Topoisomerase II makes double-strand breaks. This chain is DNA topoisomerase 2 (TOP2), found in Trypanosoma brucei brucei.